Reading from the N-terminus, the 76-residue chain is uncharacterized protein (76 aa).

Residues 24–44 form a helical membrane-spanning segment; sequence GAIFLVCYPLYCVVCFVSVLC.

It localises to the membrane. This is an uncharacterized protein from Schizosaccharomyces pombe (strain 972 / ATCC 24843) (Fission yeast).